A 156-amino-acid chain; its full sequence is Ribosomal RNA large subunit methyltransferase H (156 aa).

S-adenosyl-L-methionine contacts are provided by residues leucine 73, glycine 104, and 123-128 (LSKLTL).

Belongs to the RNA methyltransferase RlmH family. In terms of assembly, homodimer.

The protein localises to the cytoplasm. The catalysed reaction is pseudouridine(1915) in 23S rRNA + S-adenosyl-L-methionine = N(3)-methylpseudouridine(1915) in 23S rRNA + S-adenosyl-L-homocysteine + H(+). Its function is as follows. Specifically methylates the pseudouridine at position 1915 (m3Psi1915) in 23S rRNA. In Hydrogenovibrio crunogenus (strain DSM 25203 / XCL-2) (Thiomicrospira crunogena), this protein is Ribosomal RNA large subunit methyltransferase H.